The following is a 119-amino-acid chain: Large ribosomal subunit protein uL18 (119 aa).

This sequence belongs to the universal ribosomal protein uL18 family. In terms of assembly, part of the 50S ribosomal subunit; part of the 5S rRNA/L5/L18/L25 subcomplex. Contacts the 5S and 23S rRNAs.

This is one of the proteins that bind and probably mediate the attachment of the 5S RNA into the large ribosomal subunit, where it forms part of the central protuberance. The protein is Large ribosomal subunit protein uL18 of Staphylococcus aureus (strain bovine RF122 / ET3-1).